Reading from the N-terminus, the 674-residue chain is DNA ligase (674 aa).

Residues 42–46 (DNVYD), 91–92 (SM), and Glu-121 each bind NAD(+). Lys-123 functions as the N6-AMP-lysine intermediate in the catalytic mechanism. NAD(+) is bound by residues Arg-144, Glu-178, Lys-294, and Lys-318. Cys-412, Cys-415, Cys-430, and Cys-435 together coordinate Zn(2+). The 79-residue stretch at 596-674 (VKDSFVAGKT…ETELLANLKD (79 aa)) folds into the BRCT domain.

This sequence belongs to the NAD-dependent DNA ligase family. LigA subfamily. Mg(2+) serves as cofactor. Requires Mn(2+) as cofactor.

The enzyme catalyses NAD(+) + (deoxyribonucleotide)n-3'-hydroxyl + 5'-phospho-(deoxyribonucleotide)m = (deoxyribonucleotide)n+m + AMP + beta-nicotinamide D-nucleotide.. In terms of biological role, DNA ligase that catalyzes the formation of phosphodiester linkages between 5'-phosphoryl and 3'-hydroxyl groups in double-stranded DNA using NAD as a coenzyme and as the energy source for the reaction. It is essential for DNA replication and repair of damaged DNA. In Lacticaseibacillus paracasei (strain ATCC 334 / BCRC 17002 / CCUG 31169 / CIP 107868 / KCTC 3260 / NRRL B-441) (Lactobacillus paracasei), this protein is DNA ligase.